A 533-amino-acid polypeptide reads, in one-letter code: Phospho-2-dehydro-3-deoxyheptonate aldolase 1, chloroplastic (533 aa).

The transit peptide at 1–57 (MALSTNSTTSSLLPKTPLVQQPLLKNASLPTTTKAIRFIQPISAIHSSDSSKNTPIV) directs the protein to the chloroplast. Over residues 47–56 (SSDSSKNTPI) the composition is skewed to polar residues. The tract at residues 47–70 (SSDSSKNTPIVSAKPSSPPAATST) is disordered. The span at 57–70 (VSAKPSSPPAATST) shows a compositional bias: low complexity. Cys145 contacts Mn(2+). Substrate is bound by residues Arg184, 343–344 (ER), Lys366, and Arg397. Residues His429, Glu471, and Asp501 each contribute to the Mn(2+) site.

It belongs to the class-II DAHP synthase family. Homodimer. It depends on Mn(2+) as a cofactor. In terms of tissue distribution, mostly expressed in flowers, especially in petal limbs and tubes, and, to a lower extent, in roots, stems, stigmas, anthers, leaves and sepals.

Its subcellular location is the plastid. It localises to the chloroplast. The enzyme catalyses D-erythrose 4-phosphate + phosphoenolpyruvate + H2O = 7-phospho-2-dehydro-3-deoxy-D-arabino-heptonate + phosphate. Its pathway is metabolic intermediate biosynthesis; chorismate biosynthesis; chorismate from D-erythrose 4-phosphate and phosphoenolpyruvate: step 1/7. Involved in the production of volatile organic compounds (VOCs), including floral volatile benzenoids and phenylpropanoids (FVBP), in flowers of fragrant cultivars (e.g. cv. Mitchell and cv. V26), scent attracting pollinators (e.g. the night-active hawkmoth pollinator Manduca sexta). Catalyzes an aldol-like condensation reaction between phosphoenolpyruvate (PEP) and D-erythrose 4-phosphate (E4P) to generate 3-deoxy-D-arabino-heptulosonate 7-phosphate (DAH7P) and inorganic phosphate. This Petunia hybrida (Petunia) protein is Phospho-2-dehydro-3-deoxyheptonate aldolase 1, chloroplastic.